Here is a 226-residue protein sequence, read N- to C-terminus: Molybdenum transport system permease protein ModB (226 aa).

Residues 11–217 enclose the ABC transmembrane type-1 domain; that stretch reads IRLTLELASL…SFLVLFALYS (207 aa). 5 helical membrane passes run 17–37, 47–67, 88–108, 150–170, and 197–217; these read LASL…WWLA, IGAV…FYLL, LPFT…PFVV, ITAA…VLMI, and AHWL…ALYS.

It belongs to the binding-protein-dependent transport system permease family. CysTW subfamily.

The protein localises to the cell inner membrane. Functionally, part of the binding-protein-dependent transport system for molybdenum; probably responsible for the translocation of the substrate across the membrane. The polypeptide is Molybdenum transport system permease protein ModB (modB) (Azotobacter vinelandii).